The sequence spans 261 residues: uncharacterized protein (261 aa).

A divalent metal cation is bound by residues Asp43, His45, Asp75, Asn106, His197, and His199.

The protein belongs to the metallophosphoesterase superfamily. A divalent metal cation is required as a cofactor.

This is an uncharacterized protein from Aquifex aeolicus (strain VF5).